Here is a 266-residue protein sequence, read N- to C-terminus: Small ribosomal subunit protein uS2 (266 aa).

It belongs to the universal ribosomal protein uS2 family.

In Corynebacterium diphtheriae (strain ATCC 700971 / NCTC 13129 / Biotype gravis), this protein is Small ribosomal subunit protein uS2.